The sequence spans 92 residues: Large ribosomal subunit protein bL25 (92 aa).

This sequence belongs to the bacterial ribosomal protein bL25 family. As to quaternary structure, part of the 50S ribosomal subunit; part of the 5S rRNA/L5/L18/L25 subcomplex. Contacts the 5S rRNA. Binds to the 5S rRNA independently of L5 and L18.

In terms of biological role, this is one of the proteins that binds to the 5S RNA in the ribosome where it forms part of the central protuberance. The sequence is that of Large ribosomal subunit protein bL25 from Aliivibrio salmonicida (strain LFI1238) (Vibrio salmonicida (strain LFI1238)).